We begin with the raw amino-acid sequence, 291 residues long: Small ribosomal subunit protein uS2 (291 aa).

The disordered stretch occupies residues 231-291 (NRGSGTTEAP…AAEAPAEDAK (61 aa)). A compositionally biased stretch (basic and acidic residues) spans 246–259 (EWERELLEGSKAEE). The segment covering 260-285 (AAAAAPAENAEAPAAPAAEAPAAAEA) has biased composition (low complexity).

Belongs to the universal ribosomal protein uS2 family.

The protein is Small ribosomal subunit protein uS2 of Pseudarthrobacter chlorophenolicus (strain ATCC 700700 / DSM 12829 / CIP 107037 / JCM 12360 / KCTC 9906 / NCIMB 13794 / A6) (Arthrobacter chlorophenolicus).